Here is a 138-residue protein sequence, read N- to C-terminus: Small ribosomal subunit protein uS11c (138 aa).

It belongs to the universal ribosomal protein uS11 family. Part of the 30S ribosomal subunit.

Its subcellular location is the plastid. The protein is Small ribosomal subunit protein uS11c of Cuscuta gronovii (Common dodder).